Here is a 180-residue protein sequence, read N- to C-terminus: Glycoprotein Xg (180 aa).

An N-terminal signal peptide occupies residues 1–21 (MESWWGLPCLAFLCFLMHARG). The Extracellular portion of the chain corresponds to 22–142 (QRDFDLADAL…GNPEGNMVAK (121 aa)). Residues 28 to 133 (ADALDDPEPT…HGGDHHSTYG (106 aa)) are disordered. A compositionally biased stretch (pro residues) spans 47 to 57 (KPKPPYYPQPE). The helical transmembrane segment at 143–163 (IVSPIVSVVVVTLLGAAASYF) threads the bilayer. The Cytoplasmic segment spans residues 164–180 (KLNNRRNCFRTHEPENV).

Belongs to the CD99 family. In terms of processing, O-glycosylated. Expressed in erythroid tissues, including thymus, bone marrow and fetal liver, and in several nonerythroid tissues, such as heart, placenta, skeletal muscle, thyroid and trachea, as well as in skin fibroblasts. Expression is low or undetectable in other tissues.

The protein resides in the cell membrane. This Homo sapiens (Human) protein is Glycoprotein Xg (XG).